The primary structure comprises 492 residues: Protein adenylyltransferase Fic (492 aa).

The span at 1–17 shows a compositional bias: low complexity; it reads MCMEAEPPSPPAQQQEQ. The segment at 1-21 is disordered; the sequence is MCMEAEPPSPPAQQQEQVNPP. Residues 33–55 traverse the membrane as a helical segment; sequence LYRLVLLFVAGSLAAWTFHALSS. 2 TPR repeats span residues 118-151 and 152-186; these read ALGA…APRH and PEVL…SPSN. Positions 243 to 248 match the Inhibitory (S/T)XXXE(G/N) motif motif; it reads SVGIEG. ATP is bound by residues Glu247 and 328–331; that span reads VGGH. One can recognise a Fido domain in the interval 297–432; the sequence is ITIKDILELH…IRPFVRFIAD (136 aa). His375 is an active-site residue. ATP contacts are provided by residues 379-386, 411-412, and Asn419; these read DGNGRTSR and YY.

The protein belongs to the fic family. In terms of assembly, homodimer.

It is found in the membrane. It carries out the reaction L-tyrosyl-[protein] + ATP = O-(5'-adenylyl)-L-tyrosyl-[protein] + diphosphate. It catalyses the reaction L-threonyl-[protein] + ATP = 3-O-(5'-adenylyl)-L-threonyl-[protein] + diphosphate. The catalysed reaction is 3-O-(5'-adenylyl)-L-threonyl-[protein] + H2O = L-threonyl-[protein] + AMP + H(+). Its activity is regulated as follows. The side chain of Glu-247 determines which of the two opposing activities (AMPylase or de-AMPylase) will take place. In response to endoplasmic reticulum stress, mediates de-AMPylase activity. Adenylyltransferase activity is inhibited by the inhibitory helix present at the N-terminus: Glu-247 binds ATP and competes with ATP-binding at Arg-386, thereby preventing adenylyltransferase activity. In unstressed cells, disengagement of Glu-247 promotes adenylyltransferase activity. Activation dissociates ATP-binding from Glu-247, allowing ordered binding of the entire ATP moiety with the alpha-phosphate in an orientation that is productive for accepting an incoming target hydroxyl side chain. Protein that can both mediate the addition of adenosine 5'-monophosphate (AMP) to specific residues of target proteins (AMPylation), and the removal of the same modification from target proteins (de-AMPylation), depending on the context. The side chain of Glu-247 determines which of the two opposing activities (AMPylase or de-AMPylase) will take place. Acts as a key regulator of the unfolded protein response (UPR) by mediating AMPylation or de-AMPylation of Hsc70-3/BiP. In unstressed cells, acts as an adenylyltransferase by mediating AMPylation of Hsc70-3/BiP at 'Thr-518', thereby inactivating it. In response to endoplasmic reticulum stress, acts as a phosphodiesterase by mediating removal of ATP (de-AMPylation) from Hsc70-3/BiP at 'Thr-518', leading to restore HSPA5/BiP activity. In Drosophila simulans (Fruit fly), this protein is Protein adenylyltransferase Fic.